The chain runs to 241 residues: Cysteine-rich secretory protein 3 (241 aa).

Positions 1 to 19 (MALMLVLFFLAAVLPPSLL) are cleaved as a signal peptide. The SCP domain occupies 44 to 170 (SKHNQLRRKV…PLRYFYVCRY (127 aa)). N-linked (GlcNAc...) asparagine glycosylation is found at Asn118, Asn132, and Asn175. 5 cysteine pairs are disulfide-bonded: Cys194–Cys201, Cys197–Cys206, Cys210–Cys241, Cys219–Cys235, and Cys226–Cys239. One can recognise a ShKT domain in the interval 210–241 (CQYKDMSFWCKRLEYVCKHPGLKKRCLATCQC).

This sequence belongs to the CRISP family. Interacts with A1BG. Interacts with KNG1 isoform LMW. As to expression, expressed in submandibular gland.

The protein localises to the cytoplasmic vesicle. The protein resides in the secretory vesicle. In terms of biological role, this protein is supposed to help spermatozoa undergo functional maturation while they move from the testis to the ductus deferens. This chain is Cysteine-rich secretory protein 3 (Crisp3), found in Mus musculus (Mouse).